The following is a 460-amino-acid chain: Transcription factor AP-2-beta (460 aa).

A Glycyl lysine isopeptide (Lys-Gly) (interchain with G-Cter in SUMO) cross-link involves residue Lys21. Residues 30–139 are disordered; that stretch reads HDGVPSHSSR…PQLSGLDPRR (110 aa). Over residues 35–51 the composition is skewed to polar residues; it reads SHSSRLSQLGSVSQGPY. The segment covering 121-132 has biased composition (low complexity); sequence LLPQPRAALPQL. Position 258 is a phosphoserine; by PKA (Ser258). Positions 435–460 are disordered; it reads NTTTNRHTSGEGPGSKTGDKEEKHRK. Residues 451–460 are compositionally biased toward basic and acidic residues; sequence TGDKEEKHRK.

Belongs to the AP-2 family. In terms of assembly, binds DNA as a dimer. Can form homodimers or heterodimers with other AP-2 family members. Interacts with CITED4. Interacts with UBE2I. Interacts with KCTD1; this interaction represses transcription activation. Interacts with CITED2 (via C-terminus); the interaction stimulates TFAP2B-transcriptional activity. In terms of processing, sumoylated on Lys-21; which inhibits transcriptional activity.

The protein localises to the nucleus. Sequence-specific DNA-binding protein that interacts with inducible viral and cellular enhancer elements to regulate transcription of selected genes. AP-2 factors bind to the consensus sequence 5'-GCCNNNGGC-3' and activate genes involved in a large spectrum of important biological functions including proper eye, face, body wall, limb and neural tube development. They also suppress a number of genes including MCAM/MUC18, C/EBP alpha and MYC. AP-2-beta appears to be required for normal face and limb development and for proper terminal differentiation and function of renal tubular epithelia. The polypeptide is Transcription factor AP-2-beta (TFAP2B) (Canis lupus familiaris (Dog)).